Reading from the N-terminus, the 857-residue chain is uncharacterized protein (857 aa).

Disordered regions lie at residues 316–339, 484–561, 619–777, and 809–836; these read PPAP…TKEN, AKQP…PRTN, GQFP…PKPQ, and EQRP…STGK. Composition is skewed to basic and acidic residues over residues 324–339, 518–534, and 630–640; these read PENK…TKEN, KKTE…KAEE, and QRAESSIDKDC. The span at 683–700 shows a compositional bias: polar residues; sequence RTTTVQPHSHSAQPTTLR. Over residues 708 to 725 the composition is skewed to low complexity; that stretch reads SSSLIASAKPAPPISSSS. Residues 726–738 are compositionally biased toward polar residues; that stretch reads TGPNVTNPNQSSA. Over residues 809 to 828 the composition is skewed to basic and acidic residues; the sequence is EQRPEREAMKRQAQQERENA.

This is an uncharacterized protein from Mus musculus (Mouse).